Consider the following 340-residue polypeptide: Terpene synthase 29 (340 aa).

Residues D132, E197, N257, S261, and E265 each coordinate Mg(2+). The DDXXXXD motif signature appears at 132-138 (DEPDILE). An NSE/DTE motif motif is present at residues 257-265 (NDILSFYKE).

The protein belongs to the trichodiene synthase family. Mg(2+) serves as cofactor.

In terms of biological role, terpene cyclase that catalyzes the cyclization of farnesyl diphosphate (FPP) to a single major terpene scaffold whose chemical structure is still unknown. The sequence is that of Terpene synthase 29 from Postia placenta (strain ATCC 44394 / Madison 698-R) (Brown rot fungus).